The sequence spans 227 residues: Probable septum site-determining protein MinC (227 aa).

The protein belongs to the MinC family. In terms of assembly, interacts with MinD and FtsZ.

Functionally, cell division inhibitor that blocks the formation of polar Z ring septums. Rapidly oscillates between the poles of the cell to destabilize FtsZ filaments that have formed before they mature into polar Z rings. Prevents FtsZ polymerization. The polypeptide is Probable septum site-determining protein MinC (Shouchella clausii (strain KSM-K16) (Alkalihalobacillus clausii)).